Reading from the N-terminus, the 387-residue chain is UPF0400 protein C337.03 (387 aa).

The 133-residue stretch at M1–E133 folds into the CID domain. Residues K177 to S255 adopt a coiled-coil conformation. Positions T257–S387 are disordered. The span at S283–P297 shows a compositional bias: low complexity. Residues Q298–N323 show a composition bias toward polar residues. Residues N353–D365 are compositionally biased toward acidic residues. The segment covering D370–S379 has biased composition (low complexity). Position 372 is a phosphoserine (S372).

This sequence belongs to the UPF0400 (RTT103) family.

The chain is UPF0400 protein C337.03 from Schizosaccharomyces pombe (strain 972 / ATCC 24843) (Fission yeast).